The following is a 446-amino-acid chain: Putative RNA-ligase (446 aa).

The protein belongs to the asfivirus M448R family.

It localises to the virion. This African swine fever virus (isolate Tick/Malawi/Lil 20-1/1983) (ASFV) protein is Putative RNA-ligase.